The primary structure comprises 404 residues: Probable protein phosphatase 1N (404 aa).

The 261-residue stretch at 59 to 319 folds into the PPM-type phosphatase domain; sequence RFGASAVQGW…DNMTCMVVCF (261 aa). Mn(2+) is bound by residues Asp-96, Gly-97, Asp-267, and Asp-310.

The protein belongs to the PP2C family. Mg(2+) serves as cofactor. It depends on Mn(2+) as a cofactor.

It catalyses the reaction O-phospho-L-seryl-[protein] + H2O = L-seryl-[protein] + phosphate. It carries out the reaction O-phospho-L-threonyl-[protein] + H2O = L-threonyl-[protein] + phosphate. The chain is Probable protein phosphatase 1N (Ppm1n) from Mus musculus (Mouse).